We begin with the raw amino-acid sequence, 1212 residues long: DNA-directed RNA polymerase subunit beta' (1212 aa).

Positions 60, 62, 75, and 78 each coordinate Zn(2+). Residues D450, D452, and D454 each contribute to the Mg(2+) site. Residues C819, C893, C900, and C903 each coordinate Zn(2+).

This sequence belongs to the RNA polymerase beta' chain family. The RNAP catalytic core consists of 2 alpha, 1 beta, 1 beta' and 1 omega subunit. When a sigma factor is associated with the core the holoenzyme is formed, which can initiate transcription. Requires Mg(2+) as cofactor. Zn(2+) serves as cofactor.

It carries out the reaction RNA(n) + a ribonucleoside 5'-triphosphate = RNA(n+1) + diphosphate. DNA-dependent RNA polymerase catalyzes the transcription of DNA into RNA using the four ribonucleoside triphosphates as substrates. The polypeptide is DNA-directed RNA polymerase subunit beta' (Streptococcus uberis (strain ATCC BAA-854 / 0140J)).